Consider the following 289-residue polypeptide: ATP synthase gamma chain (289 aa).

This sequence belongs to the ATPase gamma chain family. F-type ATPases have 2 components, CF(1) - the catalytic core - and CF(0) - the membrane proton channel. CF(1) has five subunits: alpha(3), beta(3), gamma(1), delta(1), epsilon(1). CF(0) has three main subunits: a, b and c.

The protein resides in the cell inner membrane. Produces ATP from ADP in the presence of a proton gradient across the membrane. The gamma chain is believed to be important in regulating ATPase activity and the flow of protons through the CF(0) complex. This chain is ATP synthase gamma chain, found in Pasteurella multocida (strain Pm70).